The sequence spans 268 residues: Oxygen-evolving enhancer protein 2-1, chloroplastic (268 aa).

A chloroplast-targeting transit peptide spans 1–82 (MASTQCFLHQ…IGSKVSPADA (82 aa)).

Belongs to the PsbP family.

The protein resides in the plastid. It is found in the chloroplast thylakoid membrane. Its function is as follows. May be involved in the regulation of photosystem II. The sequence is that of Oxygen-evolving enhancer protein 2-1, chloroplastic (PSBP1) from Nicotiana tabacum (Common tobacco).